The sequence spans 603 residues: MSSEHIQNKLALLPDQPGCYLMKDRQGTIIYVGKAKVLKNRVRSYFSGTHDSKTQRLVQEIVDFEYIVTSSNVEALLLEINLIKKHDPRFNIRLKDDKTYPFIKITNERHPRLIITRQVKKDKGKYFGPYPNVYAANEVKRILDRLYPLRKCSTLPNKVCLYYHLGQCLAPCVFDVEASKYKEMQDEIVAFLNGGYKTVKNDLMKKMQEAAENMEFEKAGEFRDQINAIETTMEKQKMTMNDFVDRDVFGYAIDKGWMCVQVFFIRQGKLIERDVSQFPFYNDADEDFLTFIGQFYQKANHIPPKEIYLPDDVDSEAVQAVVPDTKIIVPQRGNKKELVKLAYKNAKIALNEKFMLLERNEERTVGAVERLGEAMGIPTPSRVEAFDNSNIHGTDPVSAMVTFLDGKPSKNDYRKYKIKTVEGPDDYATMREVIRRRYWRVLKEGLPMPDLILIDGGKGQIDSAKDVLTNELGLDIPVAGLAKDDKHRTSQLLFGDPLEIVPLERNSQEFYLLQRMQDEVHRFAITFHRQLRSKTGFQSILDGIPGVGPGRKKKLLKHFGSMKKLKEASVEEIKEAGVPLNVAEEVHKHITAFNEKAKNTEQK.

One can recognise a GIY-YIG domain in the interval 15–92 (DQPGCYLMKD…IKKHDPRFNI (78 aa)). Positions 197-232 (KTVKNDLMKKMQEAAENMEFEKAGEFRDQINAIETT) constitute a UVR domain.

Belongs to the UvrC family. Interacts with UvrB in an incision complex.

It localises to the cytoplasm. In terms of biological role, the UvrABC repair system catalyzes the recognition and processing of DNA lesions. UvrC both incises the 5' and 3' sides of the lesion. The N-terminal half is responsible for the 3' incision and the C-terminal half is responsible for the 5' incision. The polypeptide is UvrABC system protein C (Listeria innocua serovar 6a (strain ATCC BAA-680 / CLIP 11262)).